A 303-amino-acid polypeptide reads, in one-letter code: uncharacterized protein (303 aa).

The protein resides in the cytoplasm. This is an uncharacterized protein from Saccharomyces cerevisiae (strain ATCC 204508 / S288c) (Baker's yeast).